Here is a 136-residue protein sequence, read N- to C-terminus: NADPH-dependent 7-cyano-7-deazaguanine reductase (136 aa).

Residue C50 is the Thioimide intermediate of the active site. The active-site Proton donor is the D57. Substrate-binding positions include 72–74 (YEL) and 91–92 (HE).

Belongs to the GTP cyclohydrolase I family. QueF type 1 subfamily.

It localises to the cytoplasm. The catalysed reaction is 7-aminomethyl-7-carbaguanine + 2 NADP(+) = 7-cyano-7-deazaguanine + 2 NADPH + 3 H(+). Its pathway is tRNA modification; tRNA-queuosine biosynthesis. Catalyzes the NADPH-dependent reduction of 7-cyano-7-deazaguanine (preQ0) to 7-aminomethyl-7-deazaguanine (preQ1). The polypeptide is NADPH-dependent 7-cyano-7-deazaguanine reductase (Prochlorococcus marinus (strain MIT 9515)).